A 429-amino-acid chain; its full sequence is uncharacterized protein (429 aa).

A run of 11 helical transmembrane segments spans residues 27-47, 48-68, 78-98, 106-126, 142-162, 198-218, 219-239, 249-269, 288-308, 351-371, and 399-419; these read PFFF…QSIG, GIMT…VSIL, ILLC…YWVF, IFIL…FLAL, ALII…PAII, LLLA…TIVI, AILT…CFYF, VLLS…YFLD, FIVG…FGYL, LILD…IYFI, and FFIS…LIIL.

It is found in the cell membrane. In terms of biological role, may function as a transporter. This is an uncharacterized protein from Klebsiella pneumoniae.